A 341-amino-acid polypeptide reads, in one-letter code: Sulfate/thiosulfate import ATP-binding protein CysA 2 (341 aa).

The region spanning 3–235 (IRLENVVKTF…PNSSFVMRFL (233 aa)) is the ABC transporter domain. 35–42 (GPSGSGKT) lines the ATP pocket.

The protein belongs to the ABC transporter superfamily. Sulfate/tungstate importer (TC 3.A.1.6) family. The complex is composed of two ATP-binding proteins (CysA), two transmembrane proteins (CysT and CysW) and a solute-binding protein (CysP).

It localises to the cell inner membrane. The enzyme catalyses sulfate(out) + ATP + H2O = sulfate(in) + ADP + phosphate + H(+). The catalysed reaction is thiosulfate(out) + ATP + H2O = thiosulfate(in) + ADP + phosphate + H(+). Part of the ABC transporter complex CysAWTP involved in sulfate/thiosulfate import. Responsible for energy coupling to the transport system. This is Sulfate/thiosulfate import ATP-binding protein CysA 2 from Agrobacterium fabrum (strain C58 / ATCC 33970) (Agrobacterium tumefaciens (strain C58)).